We begin with the raw amino-acid sequence, 550 residues long: MSYLPLYNNNNNINNNNNNNNNRINNNKEKGVKNKPFQIFISIVFIVFLCFFLIWSMEAKKDKNIKINKISNIDQKNSPNLINEPINNNKNNKNNIPKNHKQFKNKKGLIKSFQYEPFAYKALRNEDGFEISIVTHVPIENMEKIAMIADIWRAPISASVLIKNKNDIDSVYKLIRNSLSVSEFVDFHFLYWNEDSDSIINNNNNNIINKNKINTNEEDNLNYYYYPINSLRNLSLKNSKTDWILTIDIDYLPNYGIYQYLERTLYTSLQPSKKLINSDLVSFVVPSFQLTSISTKTAPTTISTQSPTPISTLKKTTLENKNKTISTMSTTMSTTTTTSATTNTKITTKINKPLKKVNRYDLPETKFQLQTFIYDDKLIEILNKKSCLKCQSPTNYNKWFSLIDTTNPSPYKIEYSWMYDPYLLYNKSQLLEFYDERIFKEYPSSSTLSSSTTTNDYDKISFTFSMASQGFQFFILPDAWLVKMNDNEDNDNDNDGNNNLIFNNLNNNNNNNEYNENFYIVCNSILPDSKIKNNHNPHKKLFNEPLTNEC.

The tract at residues 1-29 (MSYLPLYNNNNNINNNNNNNNNRINNNKE) is disordered. The Cytoplasmic segment spans residues 1–36 (MSYLPLYNNNNNINNNNNNNNNRINNNKEKGVKNKP). The span at 8 to 25 (NNNNNINNNNNNNNNRIN) shows a compositional bias: low complexity. A helical; Signal-anchor for type II membrane protein membrane pass occupies residues 37-57 (FQIFISIVFIVFLCFFLIWSM). Over 58 to 550 (EAKKDKNIKI…LFNEPLTNEC (493 aa)) the chain is Extracellular. Residues 81–97 (LINEPINNNKNNKNNIP) show a composition bias toward low complexity. The tract at residues 81 to 100 (LINEPINNNKNNKNNIPKNH) is disordered. N-linked (GlcNAc...) asparagine glycans are attached at residues N233, N322, and N426.

The protein belongs to the glycosyltransferase 8 family. Highly divergent.

It is found in the membrane. This chain is Glycosyltransferase-like protein gnt12 (gnt12), found in Dictyostelium discoideum (Social amoeba).